Consider the following 292-residue polypeptide: Zinc finger protein OZF (292 aa).

10 consecutive C2H2-type zinc fingers follow at residues 16-38, 44-66, 72-94, 100-122, 128-150, 156-178, 184-206, 212-234, 240-262, and 268-290; these read FACKVCGKIFSHKSTLTEHEHFH, FECNECGKAFSQKQYVIKHQNTH, LECNECGKSFSQKENLLTHQKIH, FECKDCGKAFIQKSNLIRHQRTH, FICKECGKTFSGKSNLTEHEKIH, FKCNECGTAFGQKKYLIKHQNIH, YECNECGKAFSQRTSLIVHVRIH, YECNVCGKAFSQSSSLTVHVRSH, YGCNECGKAFSQFSTLALHLRIH, and YQCSECGKAFSQKSHHIRHQKIH. Residues lysine 28, lysine 51, and lysine 56 each participate in a glycyl lysine isopeptide (Lys-Gly) (interchain with G-Cter in SUMO2) cross-link. Glycyl lysine isopeptide (Lys-Gly) (interchain with G-Cter in SUMO) cross-links involve residues lysine 157 and lysine 169. Lysine 173 is covalently cross-linked (Glycyl lysine isopeptide (Lys-Gly) (interchain with G-Cter in SUMO2)). An interaction with TERF2IP region spans residues 212 to 292; the sequence is YECNVCGKAF…HIRHQKIHTH (81 aa).

Belongs to the krueppel C2H2-type zinc-finger protein family. Binds DNA. Interacts with SUMO conjugating enzyme UBC9/UBE2I. Interacts with the telomeric protein TERF2IP.

The protein resides in the nucleus. The chain is Zinc finger protein OZF (ZNF146) from Bos taurus (Bovine).